Consider the following 613-residue polypeptide: Cleavage and polyadenylation specificity factor subunit 3-II (613 aa).

Residues 67-72 (HFHMDH) carry the HXHXDH motif motif.

It belongs to the metallo-beta-lactamase superfamily. RNA-metabolizing metallo-beta-lactamase-like family. INTS11 subfamily. In terms of assembly, component of the CPSF complex, at least composed of CPSF160, CPSF100, CPSF73-I, CPSF73-II, CPSF30, FY and FIPS5. Interacts with CPSF30, CPSF100, CPSF160 and FY. In terms of tissue distribution, highly expressed in senescence leaves, petals, stamens, pollen and late stages of siliques with seeds. Also detected in roots, stems, leaves and seedlings.

It localises to the nucleus. Its function is as follows. Component of the cleavage and polyadenylation specificity factor (CPSF) complex that play a key role in pre-mRNA 3'-end formation, recognizing the AAUAAA signal sequence and interacting with poly(A) polymerase and other factors to bring about cleavage and poly(A) addition. May function as mRNA 3'-end-processing endonuclease and also be involved in the histone 3'-end pre-mRNA processing. The protein is Cleavage and polyadenylation specificity factor subunit 3-II (CPSF73-II) of Arabidopsis thaliana (Mouse-ear cress).